Reading from the N-terminus, the 174-residue chain is Disulfide bond formation protein B (174 aa).

Topologically, residues 1–14 (MLNFLNICSKTRKS) are cytoplasmic. Residues 15-31 (WVLLIFTVVILELIALY) form a helical membrane-spanning segment. At 32–49 (LQHIVLIKPCVLCVYQRC) the chain is on the periplasmic side. Cys41 and Cys44 are joined by a disulfide. A helical membrane pass occupies residues 50–65 (ALCGIGIAGLIGTIAP). At 66 to 71 (FTPLRF) the chain is on the cytoplasmic side. The helical transmembrane segment at 72 to 89 (FSIPIWIYSAWKGLLLAK) threads the bilayer. The Periplasmic portion of the chain corresponds to 90–144 (EYTDIQLHPSPFFMCDLFVQFPHWLPLNKWWPSMFDADGDCAEYKWYFLSLEISQ). Cys104 and Cys130 are disulfide-bonded. A helical membrane pass occupies residues 145 to 163 (WMLIIFANYLIIAILVSLS). Residues 164 to 174 (QIIDLKKWNNK) lie on the Cytoplasmic side of the membrane.

The protein belongs to the DsbB family.

It localises to the cell inner membrane. Functionally, required for disulfide bond formation in some periplasmic proteins. Acts by oxidizing the DsbA protein. This is Disulfide bond formation protein B from Blochmanniella pennsylvanica (strain BPEN).